The primary structure comprises 388 residues: Proline-rich protein 5 (388 aa).

Interaction with RICTOR regions lie at residues 10–95 (MSSP…LTKG) and 188–218 (HESRGVTEDYLRLETLVQKVVSPYLGTYGLH). The segment at 12-31 (SPSLSDLGKREPAAAADERG) is disordered. Residues 18 to 31 (LGKREPAAAADERG) show a composition bias toward basic and acidic residues. The residue at position 252 (Ser-252) is a Phosphoserine. Positions 254–388 (SYNTPLLNPV…EGSGGRQSVV (135 aa)) are disordered. Polar residues predominate over residues 336–346 (TRSSLPRSSPE).

Belongs to the PROTOR family. As to quaternary structure, associated component of the mechanistic target of rapamycin complex 2 (mTORC2). Binds directly to MTOR and RICTOR within the TORC2 complex. In terms of tissue distribution, most abundant in kidney and liver. Also highly expressed in brain, spleen, testis and placenta. Overexpressed in several colorectal tumors.

In terms of biological role, associated subunit of mTORC2, which regulates cell growth and survival in response to hormonal signals. mTORC2 is activated by growth factors, but, in contrast to mTORC1, seems to be nutrient-insensitive. mTORC2 seems to function upstream of Rho GTPases to regulate the actin cytoskeleton, probably by activating one or more Rho-type guanine nucleotide exchange factors. PRR5 plays an important role in regulation of PDGFRB expression and in modulation of platelet-derived growth factor signaling. May act as a tumor suppressor in breast cancer. The protein is Proline-rich protein 5 (PRR5) of Homo sapiens (Human).